The chain runs to 380 residues: Asporin (380 aa).

Residues 1-14 (MKEYVLLLFLALCS) form the signal peptide. Positions 15-32 (AKPFFSPSHIALKNMMLK) are excised as a propeptide. The segment covering 35-54 (EDTDDDDDDDDDDDDDDEDN) has biased composition (acidic residues). A disordered region spans residues 35 to 59 (EDTDDDDDDDDDDDDDDEDNSLFPT). An O-linked (GalNAc...) serine glycan is attached at serine 55. An LRRNT domain is found at 66–102 (FFPFDLFPMCPFGCQCYSRVVHCSDLGLTSVPTNIPF). 2 disulfides stabilise this stretch: cysteine 75–cysteine 81 and cysteine 79–cysteine 88. LRR repeat units follow at residues 103–124 (DTRMLDLQNNKIKEIKENDFKG), 127–148 (SLYGLILNNNKLTKIHPKAFLT), 151–173 (KLRRLYLSHNQLSEIPLNLPKSL), 174–193 (AELRIHENKVKKIQKDTFKG), 196–219 (ALHVLEMSANPLDNNGIEPGAFEG), 242–263 (TLLELHLDYNKISTVELEDFKR), 266–287 (ELQRLGLGNNKITDIENGSLAN), 290–312 (RVREIHLENNKLKKIPSGLPELK), 313–334 (YLQIIFLHSNSIARVGVNDFCP), 335–357 (TVPKMKKSLYSAISLFNNPVKYW), and 358–380 (EMQPATFRCVLSRMSVQLGNFGM). The interaction with TGFB1 stretch occupies residues 166-212 (PLNLPKSLAELRIHENKVKKIQKDTFKGMNALHVLEMSANPLDNNGI). The N-linked (GlcNAc...) asparagine glycan is linked to asparagine 282. Residues cysteine 333 and cysteine 366 are joined by a disulfide bond.

Belongs to the small leucine-rich proteoglycan (SLRP) family. SLRP class I subfamily. In terms of assembly, interacts with TGFB1, TGFB2 and TGFB3. DCN, BGN, and FMOD inhibit binding to TGFB1. Interacts with BMP2. Interacts in vitro with type II collagen. Interacts with type I collagen. DCN can inhibit collagen binding. In terms of processing, there is no serine/glycine dipeptide sequence expected for the attachment of O-linked glycosaminoglycans and this is probably not a proteoglycan. The O-linked polysaccharide on 54-Ser is probably the mucin type linked to GalNAc. Post-translationally, the N-linked glycan at Asn-282 is composed of variable structures of GlcNAc, mannose, fucose, HexNAc and hexose. As to expression, higher levels in osteoarthritic articular cartilage, aorta, uterus. Moderate expression in small intestine, heart, liver, bladder, ovary, stomach, and in the adrenal, thyroid, and mammary glands. Low expression in trachea, bone marrow, and lung. Colocalizes with TGFB1 in chondrocytes within osteoarthritic (OA) lesions of articular cartilage.

It is found in the secreted. Its subcellular location is the extracellular space. The protein resides in the extracellular matrix. Functionally, negatively regulates periodontal ligament (PDL) differentiation and mineralization to ensure that the PDL is not ossified and to maintain homeostasis of the tooth-supporting system. Inhibits BMP2-induced cytodifferentiation of PDL cells by preventing its binding to BMPR1B/BMP type-1B receptor, resulting in inhibition of BMP-dependent activation of SMAD proteins. Critical regulator of TGF-beta in articular cartilage and plays an essential role in cartilage homeostasis and osteoarthritis (OA) pathogenesis. Negatively regulates chondrogenesis in the articular cartilage by blocking the TGF-beta/receptor interaction on the cell surface and inhibiting the canonical TGF-beta/Smad signal. Binds calcium and plays a role in osteoblast-driven collagen biomineralization activity. This chain is Asporin (ASPN), found in Homo sapiens (Human).